Here is a 492-residue protein sequence, read N- to C-terminus: Transmembrane protein 39B (492 aa).

The tract at residues 1 to 54 (MGGRRGPNRTSYCRNPLCEPGSSGGSSGSHTSSASVTSVRSRTRSSSGTGLSSP) is disordered. Asn8 carries an N-linked (GlcNAc...) asparagine glycan. A compositionally biased stretch (low complexity) spans 28-53 (GSHTSSASVTSVRSRTRSSSGTGLSS). The next 8 membrane-spanning stretches (helical) occupy residues 77-97 (SILF…VHYI), 115-135 (TSLN…IVLG), 153-175 (SLFR…GWSL), 185-205 (TYSF…IPFL), 288-308 (EVLV…VWFV), 322-342 (LFLL…LPAS), 421-441 (ILNI…YSLM), and 447-467 (HQTI…FKLL).

The protein belongs to the TMEM39 family.

It is found in the endoplasmic reticulum membrane. Its function is as follows. May protect the cells against DNA damage caused by exposure to the cold-warming stress and facilitates tissue damage repair during the recovery phase. The protein is Transmembrane protein 39B of Homo sapiens (Human).